A 904-amino-acid chain; its full sequence is Phosphoenolpyruvate carboxylase (904 aa).

The tract at residues 52-71 (ISRRESDAPPSTLSEQLTGR) is disordered. Active-site residues include His151 and Lys570.

The protein belongs to the PEPCase type 1 family. It depends on Mg(2+) as a cofactor.

The enzyme catalyses oxaloacetate + phosphate = phosphoenolpyruvate + hydrogencarbonate. In terms of biological role, forms oxaloacetate, a four-carbon dicarboxylic acid source for the tricarboxylic acid cycle. In Xanthomonas oryzae pv. oryzae (strain MAFF 311018), this protein is Phosphoenolpyruvate carboxylase.